Reading from the N-terminus, the 219-residue chain is MAEISAKMVQELREKTGAGMMDCKKALTEAGGDLVKAEEVLRKKGLSAAAKKTGRAATEGAVASYIHMGGKIGVLVEVNCETDFVARTEGFQGLVKEIAMQIAAASPRWVRREEVPADVVAKELEIAKAQAREQKKPEAILEKIATGKVEKFYSEFCLMEQAWVKDDKKKIQDVLTDAVAKIGENIQIRRFARFVLGEGLEKKQENLAEEVAKAAGLQK.

The tract at residues 82 to 85 is involved in Mg(2+) ion dislocation from EF-Tu; it reads TDFV.

Belongs to the EF-Ts family.

It is found in the cytoplasm. Its function is as follows. Associates with the EF-Tu.GDP complex and induces the exchange of GDP to GTP. It remains bound to the aminoacyl-tRNA.EF-Tu.GTP complex up to the GTP hydrolysis stage on the ribosome. In Anaeromyxobacter dehalogenans (strain 2CP-C), this protein is Elongation factor Ts.